The primary structure comprises 190 residues: Threonylcarbamoyl-AMP synthase (190 aa).

The region spanning 7–190 (GDAIAAAIDV…ALTGELFRQG (184 aa)) is the YrdC-like domain.

Belongs to the SUA5 family. TsaC subfamily.

The protein resides in the cytoplasm. The enzyme catalyses L-threonine + hydrogencarbonate + ATP = L-threonylcarbamoyladenylate + diphosphate + H2O. Functionally, required for the formation of a threonylcarbamoyl group on adenosine at position 37 (t(6)A37) in tRNAs that read codons beginning with adenine. Catalyzes the conversion of L-threonine, HCO(3)(-)/CO(2) and ATP to give threonylcarbamoyl-AMP (TC-AMP) as the acyladenylate intermediate, with the release of diphosphate. This Escherichia coli O6:H1 (strain CFT073 / ATCC 700928 / UPEC) protein is Threonylcarbamoyl-AMP synthase.